A 516-amino-acid chain; its full sequence is Protein phosphatase 1H (516 aa).

Disordered regions lie at residues 102 to 122 (ADPS…PSGD) and 181 to 202 (PPTC…SGSQ). Positions 106–506 (SVSYTPSRRR…DDISVFIIPL (401 aa)) constitute a PPM-type phosphatase domain. Residues 190 to 202 (PNPQLHASASGSQ) are compositionally biased toward polar residues.

This sequence belongs to the PP2C family.

The protein resides in the nucleus. It is found in the cytoplasm. It carries out the reaction O-phospho-L-seryl-[protein] + H2O = L-seryl-[protein] + phosphate. It catalyses the reaction O-phospho-L-threonyl-[protein] + H2O = L-threonyl-[protein] + phosphate. The protein is Protein phosphatase 1H (ppm1h) of Danio rerio (Zebrafish).